Consider the following 937-residue polypeptide: Isoleucine--tRNA ligase (937 aa).

A 'HIGH' region motif is present at residues Pro-57 to His-67. Glu-556 lines the L-isoleucyl-5'-AMP pocket. The short motif at Lys-597–Ser-601 is the 'KMSKS' region element. Residue Lys-600 coordinates ATP. Residues Cys-895, Cys-898, Cys-915, and Cys-918 each contribute to the Zn(2+) site.

Belongs to the class-I aminoacyl-tRNA synthetase family. IleS type 1 subfamily. As to quaternary structure, monomer. Zn(2+) serves as cofactor.

It localises to the cytoplasm. The enzyme catalyses tRNA(Ile) + L-isoleucine + ATP = L-isoleucyl-tRNA(Ile) + AMP + diphosphate. Its function is as follows. Catalyzes the attachment of isoleucine to tRNA(Ile). As IleRS can inadvertently accommodate and process structurally similar amino acids such as valine, to avoid such errors it has two additional distinct tRNA(Ile)-dependent editing activities. One activity is designated as 'pretransfer' editing and involves the hydrolysis of activated Val-AMP. The other activity is designated 'posttransfer' editing and involves deacylation of mischarged Val-tRNA(Ile). The sequence is that of Isoleucine--tRNA ligase from Levilactobacillus brevis (strain ATCC 367 / BCRC 12310 / CIP 105137 / JCM 1170 / LMG 11437 / NCIMB 947 / NCTC 947) (Lactobacillus brevis).